The chain runs to 925 residues: Protein translocase subunit SecA (925 aa).

Residues Gln-87, 105 to 109 (GEGKT), and Asp-512 each bind ATP. Residues Cys-910, Cys-912, Cys-921, and His-922 each coordinate Zn(2+).

The protein belongs to the SecA family. As to quaternary structure, monomer and homodimer. Part of the essential Sec protein translocation apparatus which comprises SecA, SecYEG and auxiliary proteins SecDF-YajC and YidC. Requires Zn(2+) as cofactor.

It is found in the cell inner membrane. It localises to the cytoplasm. It carries out the reaction ATP + H2O + cellular proteinSide 1 = ADP + phosphate + cellular proteinSide 2.. Part of the Sec protein translocase complex. Interacts with the SecYEG preprotein conducting channel. Has a central role in coupling the hydrolysis of ATP to the transfer of proteins into and across the cell membrane, serving both as a receptor for the preprotein-SecB complex and as an ATP-driven molecular motor driving the stepwise translocation of polypeptide chains across the membrane. The sequence is that of Protein translocase subunit SecA from Psychrobacter sp. (strain PRwf-1).